The sequence spans 765 residues: Beta-glucosidase cel3A (765 aa).

The signal sequence occupies residues 1-24 (MRWSSPTSSSLSLVALLLVAHVDA). Asparagine 66, asparagine 124, asparagine 250, asparagine 304, asparagine 311, asparagine 349, asparagine 549, asparagine 588, asparagine 657, and asparagine 681 each carry an N-linked (GlcNAc...) asparagine glycan.

The protein belongs to the glycosyl hydrolase 3 family.

It localises to the secreted. The catalysed reaction is Hydrolysis of terminal, non-reducing beta-D-glucosyl residues with release of beta-D-glucose.. It participates in glycan metabolism; cellulose degradation. In terms of biological role, beta-glucosidases are one of a number of cellulolytic enzymes involved in the degradation of cellulosic biomass. Catalyzes the last step releasing glucose from the inhibitory cellobiose. Shows higher activities on cellobiose and cellotriose but lower activities on laminarioligosaccharides and polymers. The polypeptide is Beta-glucosidase cel3A (Pyricularia oryzae (strain 70-15 / ATCC MYA-4617 / FGSC 8958) (Rice blast fungus)).